The sequence spans 193 residues: Protein hunchback (193 aa).

The span at 18–31 shows a compositional bias: basic residues; sequence HLHHHHAHHSHHRH. Disordered regions lie at residues 18–57 and 153–193; these read HLHH…SNTN and LTPP…KYMA. Positions 34 to 44 are enriched in low complexity; the sequence is NSNSNASSPHQ. Residues 174-193 are compositionally biased toward basic and acidic residues; sequence EPEKEHDLMSNSSEDMKYMA.

The protein belongs to the hunchback C2H2-type zinc-finger protein family.

It is found in the nucleus. In terms of biological role, gap class segmentation protein that controls development of head structures. The sequence is that of Protein hunchback (hb) from Drosophila petalopeza (Fruit fly).